The chain runs to 401 residues: Ureide permease 4 (401 aa).

Over 1-10 the chain is Extracellular; sequence MYVVESKAGA. The helical transmembrane segment at 11–31 threads the bilayer; sequence IGCMILSLCCLGSWPAILTLL. Residues 32–40 lie on the Cytoplasmic side of the membrane; sequence ERRGRLPQH. A helical membrane pass occupies residues 41-61; it reads TFLDFATANLLAAIVIAFSLG. Residues 62–81 lie on the Extracellular side of the membrane; the sequence is EIGKSTFLKPDFTTQLPQDN. Residues 82-102 form a helical membrane-spanning segment; the sequence is WPSVLLAVAGGVLLSIGNLAT. Over 103 to 104 the chain is Cytoplasmic; the sequence is QY. The chain crosses the membrane as a helical span at residues 105–125; sequence AFAFVGLSVTEVITASITVVI. Residues 126–141 are Extracellular-facing; the sequence is GTTLNYFLDNKINKAE. A helical transmembrane segment spans residues 142-162; that stretch reads ILFPGVGCFLIAVFLGAAVHA. Over 163 to 231 the chain is Cytoplasmic; the sequence is SNAADVKEKL…KRAIKVFGKS (69 aa). 224 to 231 provides a ligand contact to ATP; sequence AIKVFGKS. Residues 232–252 traverse the membrane as a helical segment; the sequence is IMIGLFITLFAGISLSLFSPA. The Extracellular segment spans residues 253–275; it reads FNLATNDQWSTLPKGVPKLVVYT. A helical transmembrane segment spans residues 276–296; sequence AFFYFSIAGFLISLILNLIFL. Topologically, residues 297–318 are cytoplasmic; that stretch reads YRPMVGLARSSLKKYIYDSKGR. A helical transmembrane segment spans residues 319 to 339; sequence GWAVFAGFLCGFGNGLQFMGG. At 340–344 the chain is on the extracellular side; sequence QAAGY. The chain crosses the membrane as a helical span at residues 345 to 365; sequence AAADSVQALPLVSTFWGIVLF. Topologically, residues 366–374 are cytoplasmic; sequence GEYRKSSKR. Residues 375–395 traverse the membrane as a helical segment; sequence TYALLVSMLAMFVAAVAILMA. Over 396-401 the chain is Extracellular; sequence SSGHRK.

The protein belongs to the plant ureide permease (TC 2.A.7.19) family. Expressed in developing seedlings, flower filaments and stigma, and the top and bottom parts of carpels in siliques.

The protein localises to the membrane. Functionally, proton-coupled transporter that transports a wide spectrum of oxo derivatives of heterocyclic nitrogen compounds. This chain is Ureide permease 4, found in Arabidopsis thaliana (Mouse-ear cress).